We begin with the raw amino-acid sequence, 122 residues long: Double-headed protease inhibitor, submandibular gland (122 aa).

Kazal-like domains follow at residues 10–70 (GGRK…NCDI) and 71–121 (ECTQ…QCES). 6 cysteine pairs are disulfide-bonded: Cys16-Cys50, Cys28-Cys47, Cys36-Cys68, Cys72-Cys101, Cys79-Cys98, and Cys87-Cys119.

It is found in the secreted. In terms of biological role, this inhibitor is composed of two homologous actively inhibiting halves: one which inhibits trypsin, the other which inhibits elastase. This is Double-headed protease inhibitor, submandibular gland from Meles meles (Eurasian badger).